The chain runs to 200 residues: Small ribosomal subunit protein eS8A (200 aa).

Positions 1–31 (MGISRDSRHKRSATGAKRAQFRKKRKFELGR) are disordered. Phosphothreonine is present on threonine 62. 4 positions are modified to phosphoserine: serine 66, serine 69, serine 73, and serine 86. Threonine 107 carries the post-translational modification Phosphothreonine. 4 positions are modified to phosphoserine: serine 154, serine 155, serine 158, and serine 161.

It belongs to the eukaryotic ribosomal protein eS8 family. As to quaternary structure, component of the small ribosomal subunit (SSU). Mature yeast ribosomes consist of a small (40S) and a large (60S) subunit. The 40S small subunit contains 1 molecule of ribosomal RNA (18S rRNA) and 33 different proteins (encoded by 57 genes). The large 60S subunit contains 3 rRNA molecules (25S, 5.8S and 5S rRNA) and 46 different proteins (encoded by 81 genes).

The protein resides in the cytoplasm. In terms of biological role, component of the ribosome, a large ribonucleoprotein complex responsible for the synthesis of proteins in the cell. The small ribosomal subunit (SSU) binds messenger RNAs (mRNAs) and translates the encoded message by selecting cognate aminoacyl-transfer RNA (tRNA) molecules. The large subunit (LSU) contains the ribosomal catalytic site termed the peptidyl transferase center (PTC), which catalyzes the formation of peptide bonds, thereby polymerizing the amino acids delivered by tRNAs into a polypeptide chain. The nascent polypeptides leave the ribosome through a tunnel in the LSU and interact with protein factors that function in enzymatic processing, targeting, and the membrane insertion of nascent chains at the exit of the ribosomal tunnel. This is Small ribosomal subunit protein eS8A from Saccharomyces cerevisiae (strain ATCC 204508 / S288c) (Baker's yeast).